We begin with the raw amino-acid sequence, 162 residues long: MSEIHLDDLDRNILRLLKKDARLTISELSEQLKKPESTIHFRIKKLQERGVIERYTIILGEQLKPKHLALIVLEVGKPVIEDFLERYISYISSTLSALPGVLFVAKSGEDKIIALVGKNNKDELVKFIEENITSIPNLKHIQIFPITEIKKGEDLTGFLAEV.

One can recognise an HTH asnC-type domain in the interval Leu6–Pro78. A DNA-binding region (H-T-H motif) is located at residues Ile25–Lys44.

This is an uncharacterized protein from Pyrococcus furiosus (strain ATCC 43587 / DSM 3638 / JCM 8422 / Vc1).